Consider the following 352-residue polypeptide: Putative F-box protein At5g14160 (352 aa).

An F-box domain is found at 14–60 (GVDWSELPEDVIRLVLRRLRLSDFHRARAVCSTWCRVWGDCVSKPNQ).

The sequence is that of Putative F-box protein At5g14160 from Arabidopsis thaliana (Mouse-ear cress).